The primary structure comprises 506 residues: Maturase K (506 aa).

It belongs to the intron maturase 2 family. MatK subfamily.

It localises to the plastid. Its subcellular location is the chloroplast. Usually encoded in the trnK tRNA gene intron. Probably assists in splicing its own and other chloroplast group II introns. This Sullivantia sullivantii (Sullivant's coolwort) protein is Maturase K.